The sequence spans 548 residues: Chaperonin GroEL (548 aa).

ATP-binding positions include 30–33 (TLGP), lysine 51, 87–91 (DGTTT), glycine 415, 479–481 (NAA), and aspartate 495.

This sequence belongs to the chaperonin (HSP60) family. In terms of assembly, forms a cylinder of 14 subunits composed of two heptameric rings stacked back-to-back. Interacts with the co-chaperonin GroES.

Its subcellular location is the cytoplasm. The enzyme catalyses ATP + H2O + a folded polypeptide = ADP + phosphate + an unfolded polypeptide.. Functionally, together with its co-chaperonin GroES, plays an essential role in assisting protein folding. The GroEL-GroES system forms a nano-cage that allows encapsulation of the non-native substrate proteins and provides a physical environment optimized to promote and accelerate protein folding. The sequence is that of Chaperonin GroEL from Salmonella gallinarum (strain 287/91 / NCTC 13346).